A 115-amino-acid chain; its full sequence is T-cell receptor gamma chain V region V108B (115 aa).

Positions 1-18 (MLLLRWPTFCCLWVFGLG) are cleaved as a signal peptide. The interval 19 to 115 (QLEQTELSVT…EATYYCAVWI (97 aa)) is v segment.

In Mus musculus (Mouse), this protein is T-cell receptor gamma chain V region V108B (Tcrg-V1).